We begin with the raw amino-acid sequence, 127 residues long: Anti-adapter protein IraD (127 aa).

The protein belongs to the GpW/Gp25 family. IraD subfamily. As to quaternary structure, interacts with RssB.

It localises to the cytoplasm. Functionally, inhibits RpoS proteolysis by regulating RssB activity, thereby increasing the stability of the sigma stress factor RpoS during oxidative stress. Its effect on RpoS stability is due to its interaction with RssB, which probably blocks the interaction of RssB with RpoS, and the consequent delivery of the RssB-RpoS complex to the ClpXP protein degradation pathway. The protein is Anti-adapter protein IraD of Escherichia coli O127:H6 (strain E2348/69 / EPEC).